An 864-amino-acid polypeptide reads, in one-letter code: Eukaryotic translation initiation factor 3 subunit C (864 aa).

A disordered region spans residues 1–77; the sequence is MSRFFARGGS…EESEDEERVT (77 aa). Residues 14 to 54 are compositionally biased toward acidic residues; it reads SSSEDEQELYSDREEEEQFSDSEEESSEAESSEEESSDDEG. Residues 602–776 form the PCI domain; it reads FHMHINLELL…NAIVFRKGVE (175 aa). The segment at 815-864 is disordered; sequence RDQGAGARGGRGAGRGGQARGGPRFPGGQQGRRPGGQQFSGGALGGAIKA. Residues 820 to 864 are compositionally biased toward gly residues; the sequence is GARGGRGAGRGGQARGGPRFPGGQQGRRPGGQQFSGGALGGAIKA.

The protein belongs to the eIF-3 subunit C family. As to quaternary structure, component of the eukaryotic translation initiation factor 3 (eIF-3) complex.

It localises to the cytoplasm. In terms of biological role, component of the eukaryotic translation initiation factor 3 (eIF-3) complex, which is involved in protein synthesis of a specialized repertoire of mRNAs and, together with other initiation factors, stimulates binding of mRNA and methionyl-tRNAi to the 40S ribosome. The eIF-3 complex specifically targets and initiates translation of a subset of mRNAs involved in cell proliferation. This chain is Eukaryotic translation initiation factor 3 subunit C (nip1), found in Aspergillus terreus (strain NIH 2624 / FGSC A1156).